Reading from the N-terminus, the 22-residue chain is Brain peptide MVPVPVHHMADELLRNGPDTVI (22 aa).

This is Brain peptide MVPVPVHHMADELLRNGPDTVI from Apis mellifera (Honeybee).